A 372-amino-acid polypeptide reads, in one-letter code: RNA polymerase sigma factor SigA (372 aa).

Positions 139-209 (LAEANLRLVV…TRAIADQART (71 aa)) are sigma-70 factor domain-2. The Interaction with polymerase core subunit RpoC motif lies at 163 to 166 (DLIQ). The interval 218 to 294 (ETINKLIRVQ…DQDALAPSDA (77 aa)) is sigma-70 factor domain-3. Residues 307–360 (VLDTLTDREENVLRLRFGLDDGRTRTLEEVGKVFGVTRERIRQIEAKALRKLRH) form a sigma-70 factor domain-4 region. Positions 333–352 (LEEVGKVFGVTRERIRQIEA) form a DNA-binding region, H-T-H motif.

This sequence belongs to the sigma-70 factor family. RpoD/SigA subfamily. In terms of assembly, interacts transiently with the RNA polymerase catalytic core.

The protein localises to the cytoplasm. Its function is as follows. Sigma factors are initiation factors that promote the attachment of RNA polymerase to specific initiation sites and are then released. This sigma factor is the primary sigma factor during exponential growth. The sequence is that of RNA polymerase sigma factor SigA from Halalkalibacterium halodurans (strain ATCC BAA-125 / DSM 18197 / FERM 7344 / JCM 9153 / C-125) (Bacillus halodurans).